We begin with the raw amino-acid sequence, 361 residues long: sn-glycerol-3-phosphate import ATP-binding protein UgpC (361 aa).

The region spanning 4-235 is the ABC transporter domain; it reads LSLKGVRKSY…PATVFVAGFI (232 aa). 37–44 contributes to the ATP binding site; the sequence is GPSGCGKS.

This sequence belongs to the ABC transporter superfamily. sn-glycerol-3-phosphate importer (TC 3.A.1.1.3) family. The complex is composed of two ATP-binding proteins (UgpC), two transmembrane proteins (UgpA and UgpE) and a solute-binding protein (UgpB).

Its subcellular location is the cell inner membrane. It catalyses the reaction sn-glycerol 3-phosphate(out) + ATP + H2O = sn-glycerol 3-phosphate(in) + ADP + phosphate + H(+). Its function is as follows. Part of the ABC transporter complex UgpBAEC involved in sn-glycerol-3-phosphate (G3P) import. Responsible for energy coupling to the transport system. The chain is sn-glycerol-3-phosphate import ATP-binding protein UgpC from Burkholderia lata (strain ATCC 17760 / DSM 23089 / LMG 22485 / NCIMB 9086 / R18194 / 383).